We begin with the raw amino-acid sequence, 227 residues long: Thiamine-phosphate synthase (227 aa).

Residues 46–50 (QLRDK) and N87 contribute to the 4-amino-2-methyl-5-(diphosphooxymethyl)pyrimidine site. Mg(2+) is bound by residues D88 and D107. Residue S126 coordinates 4-amino-2-methyl-5-(diphosphooxymethyl)pyrimidine. 152–154 (TPT) lines the 2-[(2R,5Z)-2-carboxy-4-methylthiazol-5(2H)-ylidene]ethyl phosphate pocket. K155 lines the 4-amino-2-methyl-5-(diphosphooxymethyl)pyrimidine pocket. Position 183 (G183) interacts with 2-[(2R,5Z)-2-carboxy-4-methylthiazol-5(2H)-ylidene]ethyl phosphate.

Belongs to the thiamine-phosphate synthase family. The cofactor is Mg(2+).

The enzyme catalyses 2-[(2R,5Z)-2-carboxy-4-methylthiazol-5(2H)-ylidene]ethyl phosphate + 4-amino-2-methyl-5-(diphosphooxymethyl)pyrimidine + 2 H(+) = thiamine phosphate + CO2 + diphosphate. The catalysed reaction is 2-(2-carboxy-4-methylthiazol-5-yl)ethyl phosphate + 4-amino-2-methyl-5-(diphosphooxymethyl)pyrimidine + 2 H(+) = thiamine phosphate + CO2 + diphosphate. It carries out the reaction 4-methyl-5-(2-phosphooxyethyl)-thiazole + 4-amino-2-methyl-5-(diphosphooxymethyl)pyrimidine + H(+) = thiamine phosphate + diphosphate. It participates in cofactor biosynthesis; thiamine diphosphate biosynthesis; thiamine phosphate from 4-amino-2-methyl-5-diphosphomethylpyrimidine and 4-methyl-5-(2-phosphoethyl)-thiazole: step 1/1. Its function is as follows. Condenses 4-methyl-5-(beta-hydroxyethyl)thiazole monophosphate (THZ-P) and 2-methyl-4-amino-5-hydroxymethyl pyrimidine pyrophosphate (HMP-PP) to form thiamine monophosphate (TMP). In Mycolicibacterium smegmatis (strain ATCC 700084 / mc(2)155) (Mycobacterium smegmatis), this protein is Thiamine-phosphate synthase.